A 313-amino-acid chain; its full sequence is Nematocyst expressed protein 8 (313 aa).

The signal sequence occupies residues M1 to A19. The tract at residues G24–R56 is disordered. Residues S32 to P44 show a composition bias toward acidic residues. 3 ShKT domains span residues C65–C99, C109–C145, and F151–Y186. Cystine bridges form between C65–C99, C72–C92, C81–C96, C109–C145, C127–C142, C160–C179, and C169–C183. Over residues T222–A244 the composition is skewed to low complexity. The segment at T222–Q313 is disordered. Residues A245 to P265 are compositionally biased toward pro residues. Positions T280 to A297 are enriched in acidic residues.

This sequence belongs to the NEP3 family. As to expression, nematocytes. In late planulae, is only expressed in a handful of nematocytes in the lower pharynx. Is absent from the tentacles and outer body wall.

Its subcellular location is the nematocyst. The protein localises to the secreted. Functionally, probable toxin probably only used for predation. This is Nematocyst expressed protein 8 from Nematostella vectensis (Starlet sea anemone).